Consider the following 705-residue polypeptide: Solute carrier family 12 member 8 (705 aa).

11 helical membrane passes run 38–58 (FGTW…VVLF), 69–89 (GVLL…ITVL), 92–112 (IGVA…ISSV), 121–141 (VGLL…TGFA), 159–179 (ISVA…KWII), 181–201 (LQLL…VGSF), 232–252 (FFTV…GFNM), 268–288 (LAAV…LGAV), 306–326 (LVGF…CMGG), 368–388 (LVTM…VVTI), and 390–410 (FMLT…AHCG). A disordered region spans residues 472–512 (ESRQLGSREGNNPKNQKRKGKKGAKQTLQDSFLLDPGSPLS). Over residues 486–495 (NQKRKGKKGA) the composition is skewed to basic residues. 2 consecutive transmembrane segments (helical) span residues 587–607 (WVSL…QWLY) and 612–632 (MGVA…LYLG).

The protein belongs to the SLC12A transporter family.

The protein resides in the membrane. In terms of biological role, cation/chloride cotransporter that may play a role in the control of keratinocyte proliferation. This is Solute carrier family 12 member 8 (Slc12a8) from Mus musculus (Mouse).